The chain runs to 90 residues: U7-theraphotoxin-Hhn1c (90 aa).

Residues 1–19 (MKTAIFTVVLALAVFAVLS) form the signal peptide. A propeptide spanning residues 20–50 (FGWEANEKALSEEFTELIHEKEAASETEARE) is cleaved from the precursor. 3 cysteine pairs are disulfide-bonded: cysteine 51-cysteine 65, cysteine 58-cysteine 70, and cysteine 64-cysteine 81.

It belongs to the neurotoxin 10 (Hwtx-1) family. 13 (Hntx-13) subfamily. Expressed by the venom gland.

Its subcellular location is the secreted. In terms of biological role, ion channel inhibitor. The chain is U7-theraphotoxin-Hhn1c from Cyriopagopus hainanus (Chinese bird spider).